We begin with the raw amino-acid sequence, 226 residues long: Small ribosomal subunit protein uS3 (226 aa).

The region spanning 39-107 is the KH type-2 domain; the sequence is VRNFIRKKLA…PVHINIEEIR (69 aa).

The protein belongs to the universal ribosomal protein uS3 family. Part of the 30S ribosomal subunit. Forms a tight complex with proteins S10 and S14.

Binds the lower part of the 30S subunit head. Binds mRNA in the 70S ribosome, positioning it for translation. This chain is Small ribosomal subunit protein uS3, found in Alkalilimnicola ehrlichii (strain ATCC BAA-1101 / DSM 17681 / MLHE-1).